We begin with the raw amino-acid sequence, 420 residues long: MSGRPRTTSFAESCKPVQQPSAFGSMKVSRDKDGSKVTTVVATPGQGPDRPQEVSYTDTKVIGNGSFGVVYQAKLCDSGELVAIKKVLQDKRFKNRELQIMRKLDHCNIVRLRYFFYSSGEKKDEVYLNLVLDYVPETVYRVARHYSRAKQTLPVIYVKLYMYQLFRSLAYIHSFGICHRDIKPQNLLLDPDTAVLKLCDFGSAKQLVRGEPNVSYICSRYYRAPELIFGATDYTSSIDVWSAGCVLAELLLGQPIFPGDSGVDQLVEIIKVLGTPTREQIREMNPNYTEFKFPQIKAHPWTKVFRPRTPPEAIALCSRLLEYTPTARLTPLEACAHSFFDELRDPNVKLPNGRDTPALFNFTTQELSSNPPLATILIPPHARIQAAASPPANATAASDTNAGDRGQTNNAASASASNST.

The segment covering 1 to 22 (MSGRPRTTSFAESCKPVQQPSA) has biased composition (polar residues). The segment at 1–53 (MSGRPRTTSFAESCKPVQQPSAFGSMKVSRDKDGSKVTTVVATPGQGPDRPQE) is disordered. A Phosphoserine; by PKB/AKT1, RPS6KA3 and SGK3 modification is found at Ser9. A lipid anchor (S-palmitoyl cysteine) is attached at Cys14. In terms of domain architecture, Protein kinase spans 56-340 (YTDTKVIGNG…PLEACAHSFF (285 aa)). ATP-binding positions include 62–70 (IGNGSFGVV) and Lys85. The active-site Proton acceptor is Asp181. Tyr216 bears the Phosphotyrosine mark. Positions 385 to 420 (QAAASPPANATAASDTNAGDRGQTNNAASASASNST) are disordered. Composition is skewed to low complexity over residues 386-401 (AAAS…SDTN) and 409-420 (NNAASASASNST). Ser389 is subject to Phosphoserine.

This sequence belongs to the protein kinase superfamily. CMGC Ser/Thr protein kinase family. GSK-3 subfamily. As to quaternary structure, monomer. Interacts with DAB2IP (via C2 domain); the interaction stimulates GSK3B kinase activation. Interacts (via C2 domain) with PPP2CA. Interacts with CABYR, MMP2, MUC1, NIN and PRUNE1. Interacts with AXIN1; the interaction mediates hyperphosphorylation of CTNNB1 leading to its ubiquitination and destruction. Interacts with and phosphorylates SNAI1. Interacts with DNM1L (via a C-terminal domain). Interacts with ARRB2. Interacts with DISC1. Found in a complex composed of MACF1, APC, AXIN1, CTNNB1 and GSK3B. Interacts with SGK3. Interacts with the CLOCK-BMAL1 heterodimer. Interacts with ZBED3. Interacts with the BMAL1. The complex composed, at least, of APC, CTNNB1 and GSK3B interacts with JPT1; the interaction requires the inactive form of GSK3B (phosphorylated at 'Ser-9'). Forms a complex composed of PRKAR2A or PRKAR2B, GSK3B and GSKIP through GSKIP interaction; facilitates PKA-induced phosphorylation and regulates GSK3B activity. Interacts with GSKIP. Interacts with GID8. Interacts with PIWIL2. Interacts with LMBR1L. Interacts with DDX3X. Interacts with BIRC2. Interacts with TNFRSF10B; TNFRSF10B stimulation inhibits GSK3B kinase activity. Found in a complex with SLC39A6, SLC39A10 and with GSK3B that controls NCAM1 phosphorylation. Interacts with PKP3 (via ARM repeats); the interaction may be involved in PKP3 protein degradation. Post-translationally, phosphorylated by AKT1 and ILK1. Upon insulin-mediated signaling, the activated PKB/AKT1 protein kinase phosphorylates and deactivates GSK3B, resulting in the dephosphorylation and activation of GYS1. Activated by phosphorylation at Tyr-216. Phosphorylation of Ser-9 in the hippocampus peaks at CT0, whereas in the liver it peaks at CT12. Inactivated by phosphorylation at Ser-9. Phosphorylated in a circadian manner in the hippocampus. Mono-ADP-ribosylation by PARP10 negatively regulates kinase activity. In terms of processing, palmitoylated. Palmitoylation by ZDHHC4 prevents AKT1-mediated phosphorylation. As to expression, expressed in the liver (at protein level).

The protein resides in the cytoplasm. Its subcellular location is the nucleus. It is found in the cell membrane. It carries out the reaction L-seryl-[tau protein] + ATP = O-phospho-L-seryl-[tau protein] + ADP + H(+). It catalyses the reaction L-threonyl-[tau protein] + ATP = O-phospho-L-threonyl-[tau protein] + ADP + H(+). The catalysed reaction is L-seryl-[protein] + ATP = O-phospho-L-seryl-[protein] + ADP + H(+). The enzyme catalyses L-threonyl-[protein] + ATP = O-phospho-L-threonyl-[protein] + ADP + H(+). Its activity is regulated as follows. Activated by phosphorylation at Tyr-216. In response to insulin, inhibited by phosphorylation at Ser-9 by PKB/AKT1 and RPS6KA3; phosphorylation at this site causes a conformational change, preventing access of substrates to the active site. Inhibited by IL22 treatment which also triggers phosphorylation at Ser-9, promoting inactivation. Inhibited by lithium. Its function is as follows. Constitutively active protein kinase that acts as a negative regulator in the hormonal control of glucose homeostasis, Wnt signaling and regulation of transcription factors and microtubules, by phosphorylating and inactivating glycogen synthase (GYS1 or GYS2), EIF2B, CTNNB1/beta-catenin, APC, AXIN1, DPYSL2/CRMP2, JUN, NFATC1/NFATC, MAPT/TAU and MACF1. Requires primed phosphorylation of the majority of its substrates. In skeletal muscle, contributes to insulin regulation of glycogen synthesis by phosphorylating and inhibiting GYS1 activity and hence glycogen synthesis. May also mediate the development of insulin resistance by regulating activation of transcription factors. Regulates protein synthesis by controlling the activity of initiation factor 2B (EIF2BE/EIF2B5) in the same manner as glycogen synthase. In Wnt signaling, GSK3B forms a multimeric complex with APC, AXIN1 and CTNNB1/beta-catenin and phosphorylates the N-terminus of CTNNB1 leading to its degradation mediated by ubiquitin/proteasomes. Phosphorylates JUN at sites proximal to its DNA-binding domain, thereby reducing its affinity for DNA. Phosphorylates NFATC1/NFATC on conserved serine residues promoting NFATC1/NFATC nuclear export, shutting off NFATC1/NFATC gene regulation, and thereby opposing the action of calcineurin. Phosphorylates MAPT/TAU on 'Thr-548', decreasing significantly MAPT/TAU ability to bind and stabilize microtubules. MAPT/TAU is the principal component of neurofibrillary tangles in Alzheimer disease. Plays an important role in ERBB2-dependent stabilization of microtubules at the cell cortex. Phosphorylates MACF1, inhibiting its binding to microtubules which is critical for its role in bulge stem cell migration and skin wound repair. Probably regulates NF-kappa-B (NFKB1) at the transcriptional level and is required for the NF-kappa-B-mediated anti-apoptotic response to TNF-alpha (TNF/TNFA). Negatively regulates replication in pancreatic beta-cells, resulting in apoptosis, loss of beta-cells and diabetes. Through phosphorylation of the anti-apoptotic protein MCL1, may control cell apoptosis in response to growth factors deprivation. Phosphorylates MUC1 in breast cancer cells, decreasing the interaction of MUC1 with CTNNB1/beta-catenin. Is necessary for the establishment of neuronal polarity and axon outgrowth. Phosphorylates MARK2, leading to inhibition of its activity. Phosphorylates SIK1 at 'Thr-182', leading to sustainment of its activity. Phosphorylates ZC3HAV1 which enhances its antiviral activity. Phosphorylates SNAI1, leading to its ubiquitination and proteasomal degradation. Phosphorylates SFPQ at 'Thr-687' upon T-cell activation. Phosphorylates NR1D1 st 'Ser-55' and 'Ser-59' and stabilizes it by protecting it from proteasomal degradation. Regulates the circadian clock via phosphorylation of the major clock components including BMAL1, CLOCK and PER2. Phosphorylates CLOCK AT 'Ser-427' and targets it for proteasomal degradation. Phosphorylates BMAL1 at 'Ser-17' and 'Ser-21' and primes it for ubiquitination and proteasomal degradation. Phosphorylates FBXL2 at 'Thr-404' and primes it for ubiquitination by the SCF(FBXO3) complex and proteasomal degradation. Phosphorylates OGT at 'Ser-3' or 'Ser-4' which positively regulates its activity. Phosphorylates MYCN in neuroblastoma cells which may promote its degradation. Regulates the circadian rhythmicity of hippocampal long-term potentiation and BMAL1 and PER2 expression. Acts as a regulator of autophagy by mediating phosphorylation of KAT5/TIP60 under starvation conditions, activating KAT5/TIP60 acetyltransferase activity and promoting acetylation of key autophagy regulators, such as ULK1 and RUBCNL/Pacer. Negatively regulates extrinsic apoptotic signaling pathway via death domain receptors. Promotes the formation of an anti-apoptotic complex, made of DDX3X, BRIC2 and GSK3B, at death receptors, including TNFRSF10B. The anti-apoptotic function is most effective with weak apoptotic signals and can be overcome by stronger stimulation. Phosphorylates E2F1, promoting the interaction between E2F1 and USP11, stabilizing E2F1 and promoting its activity. Phosphorylates mTORC2 complex component RICTOR at 'Ser-1235' in response to endoplasmic stress, inhibiting mTORC2. Phosphorylates FXR1, promoting FXR1 ubiquitination by the SCF(FBXO4) complex and FXR1 degradation by the proteasome. Phosphorylates interleukin-22 receptor subunit IL22RA1, preventing its proteasomal degradation. The protein is Glycogen synthase kinase-3 beta of Mus musculus (Mouse).